A 123-amino-acid chain; its full sequence is Small ribosomal subunit protein uS12 (123 aa).

Position 89 is a 3-methylthioaspartic acid (aspartate 89).

This sequence belongs to the universal ribosomal protein uS12 family. Part of the 30S ribosomal subunit. Contacts proteins S8 and S17. May interact with IF1 in the 30S initiation complex.

Its function is as follows. With S4 and S5 plays an important role in translational accuracy. Interacts with and stabilizes bases of the 16S rRNA that are involved in tRNA selection in the A site and with the mRNA backbone. Located at the interface of the 30S and 50S subunits, it traverses the body of the 30S subunit contacting proteins on the other side and probably holding the rRNA structure together. The combined cluster of proteins S8, S12 and S17 appears to hold together the shoulder and platform of the 30S subunit. The sequence is that of Small ribosomal subunit protein uS12 from Acidiphilium cryptum (strain JF-5).